The primary structure comprises 439 residues: CBL-interacting serine/threonine-protein kinase 20 (439 aa).

Residues 12–266 (YELGRLLGQG…IEKIMENSWF (255 aa)) enclose the Protein kinase domain. Residues 18-26 (LGQGTFAKV) and lysine 41 each bind ATP. Aspartate 134 acts as the Proton acceptor in catalysis. Positions 152–181 (DFGLSALRESKQQDGLLHTTCGTPAYVAPE) are activation loop. Serine 156 carries the phosphoserine modification. At threonine 170 the chain carries Phosphothreonine. One can recognise an NAF domain in the interval 297 to 322 (VKPMSYNAFDLISSLSQGFDLSGLFE). The segment at 326–356 (RSESKFTTKKDAKEIVSKFEEIATSSERFNL) is PPI.

Belongs to the protein kinase superfamily. CAMK Ser/Thr protein kinase family. SNF1 subfamily. It depends on Mn(2+) as a cofactor. In terms of processing, autophosphorylated. In terms of tissue distribution, confined to mature leaves.

The enzyme catalyses L-seryl-[protein] + ATP = O-phospho-L-seryl-[protein] + ADP + H(+). The catalysed reaction is L-threonyl-[protein] + ATP = O-phospho-L-threonyl-[protein] + ADP + H(+). In terms of biological role, CIPK serine-threonine protein kinases interact with CBL proteins. Binding of a CBL protein to the regulatory NAF domain of CIPK protein lead to the activation of the kinase in a calcium-dependent manner. Required for the abscisic acid-mediated (ABA) signaling pathway involved in seed germination and growth elongation inhibition. In Arabidopsis thaliana (Mouse-ear cress), this protein is CBL-interacting serine/threonine-protein kinase 20 (CIPK20).